Reading from the N-terminus, the 701-residue chain is Elongation factor G (701 aa).

One can recognise a tr-type G domain in the interval 8–290 (KHYRNIGISA…AVIEYLPAPI (283 aa)). GTP is bound by residues 17-24 (AHIDAGKT), 88-92 (DTPGH), and 142-145 (NKMD).

The protein belongs to the TRAFAC class translation factor GTPase superfamily. Classic translation factor GTPase family. EF-G/EF-2 subfamily.

Its subcellular location is the cytoplasm. Catalyzes the GTP-dependent ribosomal translocation step during translation elongation. During this step, the ribosome changes from the pre-translocational (PRE) to the post-translocational (POST) state as the newly formed A-site-bound peptidyl-tRNA and P-site-bound deacylated tRNA move to the P and E sites, respectively. Catalyzes the coordinated movement of the two tRNA molecules, the mRNA and conformational changes in the ribosome. The polypeptide is Elongation factor G (Hamiltonella defensa subsp. Acyrthosiphon pisum (strain 5AT)).